The following is a 122-amino-acid chain: Large ribosomal subunit protein bL12 (122 aa).

Belongs to the bacterial ribosomal protein bL12 family. As to quaternary structure, homodimer. Part of the ribosomal stalk of the 50S ribosomal subunit. Forms a multimeric L10(L12)X complex, where L10 forms an elongated spine to which 2 to 4 L12 dimers bind in a sequential fashion. Binds GTP-bound translation factors.

Forms part of the ribosomal stalk which helps the ribosome interact with GTP-bound translation factors. Is thus essential for accurate translation. The protein is Large ribosomal subunit protein bL12 of Flavobacterium psychrophilum (strain ATCC 49511 / DSM 21280 / CIP 103535 / JIP02/86).